Here is a 113-residue protein sequence, read N- to C-terminus: MLITTTPTIEGRKILHYRGLVTGETIIGANIFRDILASITDVIGGRSKAYEDALMTARDNAIEEMKNRATLMQANAIVGVDLDYEVFGEGGMMMVSVSGTAVLLEGGTGVPLA.

Belongs to the UPF0145 family.

The chain is UPF0145 protein SynWH7803_1684 from Synechococcus sp. (strain WH7803).